A 388-amino-acid polypeptide reads, in one-letter code: F-box/LRR-repeat protein At3g59190 (388 aa).

Positions 11-64 (KDIISNLPDALLCHVLSFLPTTEAASTSVLAKRWRFLLAFVPNLDLDNMIYDRP) constitute an F-box domain. 5 LRR repeats span residues 151 to 177 (KVSGTDEFTIDVGEFFLPKLKTLHLSA), 180 to 205 (FGDEGGPPFAKLISACHALEELVMIK), 228 to 252 (CENIDENPKSVSFDTPNLVYLEFTD), 313 to 345 (TMYLSSEALEVLTFCCKKAIPVFNNLIHLTVET), and 346 to 371 (DERVDWESLPILLKNCPNLETLIFEV).

The polypeptide is F-box/LRR-repeat protein At3g59190 (Arabidopsis thaliana (Mouse-ear cress)).